We begin with the raw amino-acid sequence, 240 residues long: FMN-dependent NADH:quinone oxidoreductase 2 (240 aa).

FMN is bound by residues serine 10 and 23–25 (SIS).

The protein belongs to the azoreductase type 1 family. As to quaternary structure, homodimer. FMN is required as a cofactor.

It catalyses the reaction 2 a quinone + NADH + H(+) = 2 a 1,4-benzosemiquinone + NAD(+). It carries out the reaction N,N-dimethyl-1,4-phenylenediamine + anthranilate + 2 NAD(+) = 2-(4-dimethylaminophenyl)diazenylbenzoate + 2 NADH + 2 H(+). Its function is as follows. Quinone reductase that provides resistance to thiol-specific stress caused by electrophilic quinones. In terms of biological role, also exhibits azoreductase activity. Catalyzes the reductive cleavage of the azo bond in aromatic azo compounds to the corresponding amines. This is FMN-dependent NADH:quinone oxidoreductase 2 from Idiomarina loihiensis (strain ATCC BAA-735 / DSM 15497 / L2-TR).